The following is a 179-amino-acid chain: Large ribosomal subunit protein uL6 (179 aa).

This sequence belongs to the universal ribosomal protein uL6 family. As to quaternary structure, part of the 50S ribosomal subunit.

Its function is as follows. This protein binds to the 23S rRNA, and is important in its secondary structure. It is located near the subunit interface in the base of the L7/L12 stalk, and near the tRNA binding site of the peptidyltransferase center. The chain is Large ribosomal subunit protein uL6 from Syntrophobacter fumaroxidans (strain DSM 10017 / MPOB).